The sequence spans 202 residues: ATP-dependent Clp protease proteolytic subunit (202 aa).

Serine 98 (nucleophile) is an active-site residue. Histidine 123 is an active-site residue.

The protein belongs to the peptidase S14 family. Fourteen ClpP subunits assemble into 2 heptameric rings which stack back to back to give a disk-like structure with a central cavity, resembling the structure of eukaryotic proteasomes.

The protein resides in the cytoplasm. It catalyses the reaction Hydrolysis of proteins to small peptides in the presence of ATP and magnesium. alpha-casein is the usual test substrate. In the absence of ATP, only oligopeptides shorter than five residues are hydrolyzed (such as succinyl-Leu-Tyr-|-NHMec, and Leu-Tyr-Leu-|-Tyr-Trp, in which cleavage of the -Tyr-|-Leu- and -Tyr-|-Trp bonds also occurs).. Functionally, cleaves peptides in various proteins in a process that requires ATP hydrolysis. Has a chymotrypsin-like activity. Plays a major role in the degradation of misfolded proteins. This Syntrophobacter fumaroxidans (strain DSM 10017 / MPOB) protein is ATP-dependent Clp protease proteolytic subunit.